The following is a 403-amino-acid chain: MGRAKKVVLAYSGGVDTSVCIPYLKHEWGVESVVTLAVDLGQGAELEAIQAKALRAGAEQSLVREAVQTLIADYAFPAIQANALYEQRYPLSTALARPLIAQLLVEVAEEVGADAVAHGCTGKGNDQVRFDLAIAALNPKLKVLAPAREWGMTREETIAYGERYGIPMPVQKSSPYSIDLNILGRSVEAGILEDADQEPPEEVYALTRSIAQTPDEPAYVEIAFEEGIPVELDGQRLGPRALFERLNALAGSHGVGRIDMIEDRLVGIKSREIYECPALTVLIQAHRELESLTLTREVLHYKYGIETTYSQLVYNGLWYSPLREALDAFIRTTQKSVTGVVRMRLHKGQAVCVGRRSPYSLYNAELATYGEGDQFDHRAAEGFIYIWGLPTRTWAQVHRGSGA.

10–18 is a binding site for ATP; that stretch reads AYSGGVDTS. Tyr89 lines the L-citrulline pocket. Residue Gly119 coordinates ATP. L-aspartate contacts are provided by Thr121, Asn125, and Asp126. Asn125 provides a ligand contact to L-citrulline. L-citrulline-binding residues include Arg129, Ser177, Ser186, Glu262, and Tyr274.

This sequence belongs to the argininosuccinate synthase family. Type 1 subfamily. As to quaternary structure, homotetramer.

The protein localises to the cytoplasm. The catalysed reaction is L-citrulline + L-aspartate + ATP = 2-(N(omega)-L-arginino)succinate + AMP + diphosphate + H(+). Its pathway is amino-acid biosynthesis; L-arginine biosynthesis; L-arginine from L-ornithine and carbamoyl phosphate: step 2/3. The polypeptide is Argininosuccinate synthase (Synechococcus sp. (strain JA-3-3Ab) (Cyanobacteria bacterium Yellowstone A-Prime)).